A 337-amino-acid chain; its full sequence is Large ribosomal subunit protein uL3 (337 aa).

Residues 1–20 (MASIHRPKRGSLAFSPRKRA) form a disordered region.

It belongs to the universal ribosomal protein uL3 family. In terms of assembly, part of the 50S ribosomal subunit. Forms a cluster with proteins L14 and L24e.

Functionally, one of the primary rRNA binding proteins, it binds directly near the 3'-end of the 23S rRNA, where it nucleates assembly of the 50S subunit. The sequence is that of Large ribosomal subunit protein uL3 from Methanosarcina barkeri (strain Fusaro / DSM 804).